The following is a 204-amino-acid chain: Urease accessory protein UreG (204 aa).

11–18 lines the GTP pocket; it reads GPVGAGKT.

It belongs to the SIMIBI class G3E GTPase family. UreG subfamily. As to quaternary structure, homodimer. UreD, UreF and UreG form a complex that acts as a GTP-hydrolysis-dependent molecular chaperone, activating the urease apoprotein by helping to assemble the nickel containing metallocenter of UreC. The UreE protein probably delivers the nickel.

Its subcellular location is the cytoplasm. Functionally, facilitates the functional incorporation of the urease nickel metallocenter. This process requires GTP hydrolysis, probably effectuated by UreG. This chain is Urease accessory protein UreG, found in Staphylococcus aureus (strain Mu3 / ATCC 700698).